We begin with the raw amino-acid sequence, 536 residues long: E3 ubiquitin-protein ligase Godzilla (536 aa).

A signal peptide spans 1-21 (MSKRSCQILTLLGLCLVCHEA). Over 22–174 (TLVGGHVLVY…DELPFNINTQ (153 aa)) the chain is Extracellular. The 63-residue stretch at 89–151 (FVALVARGEC…FVGHTTGKAL (63 aa)) folds into the PA domain. 2 N-linked (GlcNAc...) asparagine glycosylation sites follow: Asn109 and Asn132. The chain crosses the membrane as a helical span at residues 175 to 195 (LILPFSILIGMCFIIMVIYMI). The Cytoplasmic segment spans residues 196–536 (YKCIREQRRL…HSASDRQFLI (341 aa)). Residues 235–277 (CVICLEDFIEDDKLRVLPCSHPYHTHCIDPWLTENRRVCPICK) form an RING-type; atypical zinc finger. Disordered regions lie at residues 287–334 (RASR…GAAG) and 350–372 (HGTFRRGHAGRNPFEESQSSDDE). The segment covering 307-334 (TPLLQQQQSNGRQVGQVSSASSAGGAAG) has biased composition (low complexity).

This sequence belongs to the Godzilla family.

It is found in the endosome membrane. The enzyme catalyses S-ubiquitinyl-[E2 ubiquitin-conjugating enzyme]-L-cysteine + [acceptor protein]-L-lysine = [E2 ubiquitin-conjugating enzyme]-L-cysteine + N(6)-ubiquitinyl-[acceptor protein]-L-lysine.. The protein operates within protein modification; protein ubiquitination. Its function is as follows. Endosomal E3 ubiquitin-protein ligase that regulates the recycling endosome pathway by mediating ubiquitination of Synaptobrevin (Syb). Also acts as a regulator of transcytosis in wing imaginal disks by catalyzing ubiquitination of Syb: ubiquitination of Syb promotes transcytosis of wingless (wg) to the basolateral surface. The sequence is that of E3 ubiquitin-protein ligase Godzilla from Drosophila melanogaster (Fruit fly).